Here is a 315-residue protein sequence, read N- to C-terminus: 4-hydroxy-3-methylbut-2-enyl diphosphate reductase (315 aa).

Cys-12 contributes to the [4Fe-4S] cluster binding site. (2E)-4-hydroxy-3-methylbut-2-enyl diphosphate contacts are provided by His-43 and His-81. Dimethylallyl diphosphate contacts are provided by His-43 and His-81. 2 residues coordinate isopentenyl diphosphate: His-43 and His-81. [4Fe-4S] cluster is bound at residue Cys-103. His-131 contributes to the (2E)-4-hydroxy-3-methylbut-2-enyl diphosphate binding site. His-131 contacts dimethylallyl diphosphate. Position 131 (His-131) interacts with isopentenyl diphosphate. Glu-133 (proton donor) is an active-site residue. Thr-170 provides a ligand contact to (2E)-4-hydroxy-3-methylbut-2-enyl diphosphate. Cys-198 lines the [4Fe-4S] cluster pocket. (2E)-4-hydroxy-3-methylbut-2-enyl diphosphate-binding residues include Ser-226, Asn-228, and Ser-271. Dimethylallyl diphosphate contacts are provided by Ser-226, Asn-228, and Ser-271. Isopentenyl diphosphate contacts are provided by Ser-226, Asn-228, and Ser-271.

The protein belongs to the IspH family. [4Fe-4S] cluster is required as a cofactor.

The enzyme catalyses isopentenyl diphosphate + 2 oxidized [2Fe-2S]-[ferredoxin] + H2O = (2E)-4-hydroxy-3-methylbut-2-enyl diphosphate + 2 reduced [2Fe-2S]-[ferredoxin] + 2 H(+). The catalysed reaction is dimethylallyl diphosphate + 2 oxidized [2Fe-2S]-[ferredoxin] + H2O = (2E)-4-hydroxy-3-methylbut-2-enyl diphosphate + 2 reduced [2Fe-2S]-[ferredoxin] + 2 H(+). The protein operates within isoprenoid biosynthesis; dimethylallyl diphosphate biosynthesis; dimethylallyl diphosphate from (2E)-4-hydroxy-3-methylbutenyl diphosphate: step 1/1. It functions in the pathway isoprenoid biosynthesis; isopentenyl diphosphate biosynthesis via DXP pathway; isopentenyl diphosphate from 1-deoxy-D-xylulose 5-phosphate: step 6/6. Catalyzes the conversion of 1-hydroxy-2-methyl-2-(E)-butenyl 4-diphosphate (HMBPP) into a mixture of isopentenyl diphosphate (IPP) and dimethylallyl diphosphate (DMAPP). Acts in the terminal step of the DOXP/MEP pathway for isoprenoid precursor biosynthesis. The polypeptide is 4-hydroxy-3-methylbut-2-enyl diphosphate reductase (Bacillus cytotoxicus (strain DSM 22905 / CIP 110041 / 391-98 / NVH 391-98)).